The primary structure comprises 334 residues: N-acetyl-gamma-glutamyl-phosphate reductase (334 aa).

Residue Cys154 is part of the active site.

This sequence belongs to the NAGSA dehydrogenase family. Type 1 subfamily.

The protein resides in the cytoplasm. The catalysed reaction is N-acetyl-L-glutamate 5-semialdehyde + phosphate + NADP(+) = N-acetyl-L-glutamyl 5-phosphate + NADPH + H(+). It functions in the pathway amino-acid biosynthesis; L-arginine biosynthesis; N(2)-acetyl-L-ornithine from L-glutamate: step 3/4. Its function is as follows. Catalyzes the NADPH-dependent reduction of N-acetyl-5-glutamyl phosphate to yield N-acetyl-L-glutamate 5-semialdehyde. The chain is N-acetyl-gamma-glutamyl-phosphate reductase from Buchnera aphidicola subsp. Acyrthosiphon pisum (strain Tuc7).